The following is a 159-amino-acid chain: MMADREVVLTAQGLKKLEDELELLKTVRRKEIAERIKQAIAFGDISENSEYDEAKNEQAQVEDRINKLETMLRKAVIIDEEDINTDIVSIGSIVQVNDLEFDEIVEYTIVGSTEADPYELKISNESPVGRALLGTKVGDVVEVQIPDGVTKYEILKITR.

Residues 5-77 (REVVLTAQGL…LETMLRKAVI (73 aa)) adopt a coiled-coil conformation.

The protein belongs to the GreA/GreB family.

In terms of biological role, necessary for efficient RNA polymerase transcription elongation past template-encoded arresting sites. The arresting sites in DNA have the property of trapping a certain fraction of elongating RNA polymerases that pass through, resulting in locked ternary complexes. Cleavage of the nascent transcript by cleavage factors such as GreA or GreB allows the resumption of elongation from the new 3'terminus. GreA releases sequences of 2 to 3 nucleotides. The polypeptide is Transcription elongation factor GreA (Alkaliphilus oremlandii (strain OhILAs) (Clostridium oremlandii (strain OhILAs))).